A 274-amino-acid chain; its full sequence is tRNA-cytidine(32) 2-sulfurtransferase (274 aa).

The PP-loop motif signature appears at 40–45; it reads SGGKDS. [4Fe-4S] cluster is bound by residues Cys115, Cys118, and Cys206.

The protein belongs to the TtcA family. Homodimer. The cofactor is Mg(2+). It depends on [4Fe-4S] cluster as a cofactor.

Its subcellular location is the cytoplasm. The enzyme catalyses cytidine(32) in tRNA + S-sulfanyl-L-cysteinyl-[cysteine desulfurase] + AH2 + ATP = 2-thiocytidine(32) in tRNA + L-cysteinyl-[cysteine desulfurase] + A + AMP + diphosphate + H(+). The protein operates within tRNA modification. Functionally, catalyzes the ATP-dependent 2-thiolation of cytidine in position 32 of tRNA, to form 2-thiocytidine (s(2)C32). The sulfur atoms are provided by the cysteine/cysteine desulfurase (IscS) system. The polypeptide is tRNA-cytidine(32) 2-sulfurtransferase (Pseudomonas fluorescens (strain ATCC BAA-477 / NRRL B-23932 / Pf-5)).